The sequence spans 29 residues: Dermaseptin-J5 (29 aa).

V29 carries the post-translational modification Valine amide.

As to expression, expressed by the skin glands.

It is found in the secreted. Has antimicrobial activity. The polypeptide is Dermaseptin-J5 (Phasmahyla jandaia (Jandaia leaf frog)).